The primary structure comprises 322 residues: Sideroflexin-1 (322 aa).

Serine 2 bears the N-acetylserine mark. Topologically, residues 2–102 (SGELPPNINI…MSAQVPMNMT (101 aa)) are mitochondrial matrix. Residues 103–120 (ITGCMMTFYRTTPAVLFW) traverse the membrane as a helical segment. Topologically, residues 121–146 (QWVNQSFNAVVNYTNRSGDAPLTVNE) are mitochondrial intermembrane. Residues 147-167 (LGTAYVSATTGAVATALGLNA) form a helical membrane-spanning segment. Topologically, residues 168-174 (LTKRVSP) are mitochondrial matrix. Residues 175-195 (LVGRFVPFAAVAAANCINIPL) traverse the membrane as a helical segment. Residues 196–228 (MRQRELKVGIPVTDENGNRLGESASAAKQAITQ) are Mitochondrial intermembrane-facing. The chain crosses the membrane as a helical span at residues 229 to 249 (VVVSRILMAAPGMAIPPFIMN). The Mitochondrial matrix segment spans residues 250–266 (TLEKKAFLKRFPWMSAP). A helical membrane pass occupies residues 267–287 (VQVGIVGFCLVFATPLCCALF). The Mitochondrial intermembrane segment spans residues 288-322 (PQKSSMSVTSLEAELQARIRETYPELRRVYFNKGL).

It belongs to the sideroflexin family.

Its subcellular location is the mitochondrion inner membrane. The catalysed reaction is L-serine(in) = L-serine(out). It catalyses the reaction L-alanine(in) = L-alanine(out). The enzyme catalyses L-cysteine(in) = L-cysteine(out). In terms of biological role, amino acid transporter importing serine, an essential substrate of the mitochondrial branch of the one-carbon pathway, into mitochondria. Mitochondrial serine is then converted to glycine and formate, which exits to the cytosol where it is used to generate the charged folates that serve as one-carbon donors. May also transport other amino acids including alanine and cysteine. This Ovis aries (Sheep) protein is Sideroflexin-1 (SFXN1).